A 1183-amino-acid chain; its full sequence is Peroxisomal ATPase PEX6 (1183 aa).

The tract at residues 161–205 (ESRGKKTGEPEDGPLANGIDLNGVDDSDSDEDVLSQGDDDDENNV) is disordered. Positions 183–204 (GVDDSDSDEDVLSQGDDDDENN) are enriched in acidic residues. Positions 576–785 (LPNNYISPVH…VERAMTACSE (210 aa)) are AAA-cassette D1. An AAA-cassette D2 region spans residues 878 to 1070 (GILFYGPPGT…CSDAMLKAIT (193 aa)). 883–890 (GPPGTGKT) lines the ATP pocket. Positions 1160 to 1183 (IMVDGPGTGGEGAFGDDGDEEGLY) are disordered. Positions 1173-1183 (FGDDGDEEGLY) are enriched in acidic residues.

This sequence belongs to the AAA ATPase family. In terms of assembly, interacts with PEX1; forming the PEX1-PEX6 AAA ATPase complex, which is composed of a heterohexamer formed by a trimer of PEX1-PEX6 dimers.

The protein localises to the cytoplasm. It is found in the cytosol. It localises to the peroxisome membrane. The enzyme catalyses ATP + H2O = ADP + phosphate + H(+). Its function is as follows. Component of the PEX1-PEX6 AAA ATPase complex, a protein dislocase complex that mediates the ATP-dependent extraction of the PEX5 receptor from peroxisomal membranes, an essential step for PEX5 recycling. Specifically recognizes PEX5 monoubiquitinated at 'Cys-6', and pulls it out of the peroxisome lumen through the PEX2-PEX10-PEX12 retrotranslocation channel. Extraction by the PEX1-PEX6 AAA ATPase complex is accompanied by unfolding of the TPR repeats and release of bound cargo from PEX5. Regulates autophagy and biogenesis of peroxisomes and Woronin bodies. Plays important roles in mycelial growth and development and stress response. Is also essential for conidiation and fatty acid utilization. Required for nematode predation via trap formation. The sequence is that of Peroxisomal ATPase PEX6 from Arthrobotrys oligospora (strain ATCC 24927 / CBS 115.81 / DSM 1491) (Nematode-trapping fungus).